The chain runs to 512 residues: Lysine--tRNA ligase (512 aa).

E408 and E415 together coordinate Mg(2+).

It belongs to the class-II aminoacyl-tRNA synthetase family. In terms of assembly, homodimer. The cofactor is Mg(2+).

It is found in the cytoplasm. It carries out the reaction tRNA(Lys) + L-lysine + ATP = L-lysyl-tRNA(Lys) + AMP + diphosphate. This Prochlorococcus marinus (strain MIT 9215) protein is Lysine--tRNA ligase.